Reading from the N-terminus, the 413-residue chain is Serine hydroxymethyltransferase (413 aa).

Residues leucine 117 and 121–123 (GHL) each bind (6S)-5,6,7,8-tetrahydrofolate. Lysine 226 carries the N6-(pyridoxal phosphate)lysine modification. Position 349-351 (349-351 (SPF)) interacts with (6S)-5,6,7,8-tetrahydrofolate.

It belongs to the SHMT family. In terms of assembly, homodimer. Pyridoxal 5'-phosphate is required as a cofactor.

It is found in the cytoplasm. It catalyses the reaction (6R)-5,10-methylene-5,6,7,8-tetrahydrofolate + glycine + H2O = (6S)-5,6,7,8-tetrahydrofolate + L-serine. It functions in the pathway one-carbon metabolism; tetrahydrofolate interconversion. The protein operates within amino-acid biosynthesis; glycine biosynthesis; glycine from L-serine: step 1/1. In terms of biological role, catalyzes the reversible interconversion of serine and glycine with tetrahydrofolate (THF) serving as the one-carbon carrier. This reaction serves as the major source of one-carbon groups required for the biosynthesis of purines, thymidylate, methionine, and other important biomolecules. Also exhibits THF-independent aldolase activity toward beta-hydroxyamino acids, producing glycine and aldehydes, via a retro-aldol mechanism. The chain is Serine hydroxymethyltransferase from Listeria welshimeri serovar 6b (strain ATCC 35897 / DSM 20650 / CCUG 15529 / CIP 8149 / NCTC 11857 / SLCC 5334 / V8).